The chain runs to 535 residues: SIR4-interacting protein SIF2 (535 aa).

A LisH domain is found at 4-36 (TSEELNYLIWRYCQEMGHEVSALALQDETRVLE). Positions 104-140 (EGRFTLETNSESNKAGEDGASTVERETQEDDTNSIDS) are disordered. The span at 130–140 (TQEDDTNSIDS) shows a compositional bias: acidic residues. Serine 137 bears the Phosphoserine mark. 8 WD repeats span residues 155 to 186 (VKLD…RLAR), 218 to 248 (KTTN…RLWN), 259 to 289 (FHRA…ILWN), 316 to 345 (GDGS…FVYQ), 357 to 387 (GHHG…RIWH), 399 to 428 (GHSQ…RLWS), 440 to 470 (VDGV…NVYD), and 503 to 534 (SQDN…SVVA).

As to quaternary structure, homotetramer. Interacts with SIR4 N-terminal domain. Interacts with a complex composed of SIN3 and RPD3. Identified in the Set3C complex with HOS2, HST1, SNT1, CPR1, HOS4/YIL112W and SET3.

Its subcellular location is the nucleus. Antagonizes telomeric silencing in yeast. May recruit SIR4 to non-telomeric sites or repression. The chain is SIR4-interacting protein SIF2 (SIF2) from Saccharomyces cerevisiae (strain ATCC 204508 / S288c) (Baker's yeast).